A 539-amino-acid polypeptide reads, in one-letter code: MNFQIADFTRLIPEFLLLAIAAMVLLGDVLTRWSKGKEALNDRTEEAISMTLMGLGLAFVMVLIQGGFFSWMQFGDWKFYDFSIFQNLRSSGLDGSILGGAFVVDPLTHIGRLVFIGAAFVTVILTSKAKPSNNPAEFYALILFATLGMIFMTAGGELIMIYLGIELTSIPLYVLAGYFRRNPVSTEAGAKYYIFGALSSAILLFGMSLLLGLTLMNGQTMTTTPTSLRSVATAVELAFANPEGPSQGVAILALLFILAGMAYKVAIVPFHAWSPDVYQGAPTSMTAFISTASKTAGFFLLYRVLVTGFGAPSILGTAAIGTSTSFGGWTSLIAILAALTMLVGNLAALPQTNAKRMLAYSSIAQAGFLMLGLVGTQRDSGISLLMYLIAYTVTNLSAFGILALVEDAVGGTDFSNLNGLGRRAPGLALLLTVAILSLAGIPPLSGFFVKFYVFIAAWQEGAKWLVIFAVSNTVISLYYYLRFLKAVYFAPAETDEPIKVGFGPGIVMTAITLLIFGLGIVPTWLYGVLEQATIRIAAQ.

The next 13 membrane-spanning stretches (helical) occupy residues leucine 11–threonine 31, leucine 52–methionine 72, proline 106–threonine 126, leucine 141–isoleucine 161, tyrosine 193–leucine 213, glycine 248–valine 268, alanine 296–glycine 316, tryptophan 329–leucine 349, methionine 357–glutamine 377, leucine 385–valine 405, leucine 429–valine 449, alanine 462–leucine 484, and valine 500–isoleucine 520.

It belongs to the complex I subunit 2 family. In terms of assembly, NDH-1 is composed of 14 different subunits. Subunits NuoA, H, J, K, L, M, N constitute the membrane sector of the complex.

The protein resides in the cell membrane. It catalyses the reaction a quinone + NADH + 5 H(+)(in) = a quinol + NAD(+) + 4 H(+)(out). Its function is as follows. NDH-1 shuttles electrons from NADH, via FMN and iron-sulfur (Fe-S) centers, to quinones in the respiratory chain. The immediate electron acceptor for the enzyme in this species is believed to be ubiquinone. Couples the redox reaction to proton translocation (for every two electrons transferred, four hydrogen ions are translocated across the cytoplasmic membrane), and thus conserves the redox energy in a proton gradient. This is NADH-quinone oxidoreductase subunit N 2 from Herpetosiphon aurantiacus (strain ATCC 23779 / DSM 785 / 114-95).